A 218-amino-acid chain; its full sequence is MGAYRAEDDYDYLFKVVLTGDSGVGKSNLLSRFTRNDFSHDSRATIGVEFATRSIQCDDKIVKAQIWDTAGQERYRAITSAYYRGAVGALLVYDVTRHVTFENVERWLKELRDHTDANIVIMLVGNKADLRHLRAISTEEAKAFAERENTFFMETSALEAVNVDNAFTEVLTQIYRVVSKKALEAGDDPTTALPKGQMINVGGRDDISAVKKPGCCSA.

GTP is bound at residue G20 to S27. The Effector region motif lies at S42–F50. Residues D68–Q72, N126–D129, and S156–A157 contribute to the GTP site. Residues C215 and C216 are each lipidated (S-geranylgeranyl cysteine).

The protein belongs to the small GTPase superfamily. Rab family.

It localises to the cell membrane. In terms of biological role, intracellular vesicle trafficking and protein transport. The polypeptide is Ras-related protein RABA1i (RABA1I) (Arabidopsis thaliana (Mouse-ear cress)).